Consider the following 1136-residue polypeptide: Receptor-type guanylate cyclase gcy-4 (1136 aa).

A signal peptide spans 1 to 21; the sequence is MRQLNYYIFISTILTYNLTHG. The Extracellular segment spans residues 22-485; it reads QGPRPVIRVG…CPLPIFEQYR (464 aa). 7 N-linked (GlcNAc...) asparagine glycosylation sites follow: Asn-40, Asn-194, Asn-252, Asn-351, Asn-377, Asn-386, and Asn-438. A helical transmembrane segment spans residues 486–506; it reads ALVIVAIAVTILILLAIIICM. Residues 507–1136 are Cytoplasmic-facing; sequence SSKIRNRRVE…LRREMMRVEV (630 aa). In terms of domain architecture, Protein kinase spans 533–833; it reads LPMHRRASKS…EDNLMDHVFS (301 aa). The disordered stretch occupies residues 536–565; the sequence is HRRASKSSQESETESASETENFTSKSGDTM. Positions 891-1021 constitute a Guanylate cyclase domain; sequence TVFFSDLVKF…DTVNTASRME (131 aa).

The protein belongs to the adenylyl cyclase class-4/guanylyl cyclase family. Expression is biased toward ASE right (ASER) sensory neuron.

It localises to the cell membrane. The enzyme catalyses GTP = 3',5'-cyclic GMP + diphosphate. Functionally, guanylate cyclase involved in the production of the second messenger cGMP. Regulates chemotaxis responses toward Br(1-) and I(1-) salt ions in ASE right (ASER) sensory neuron. This Caenorhabditis elegans protein is Receptor-type guanylate cyclase gcy-4.